The following is a 492-amino-acid chain: Prenylcysteine oxidase 1-like (492 aa).

Positions 1 to 21 are cleaved as a signal peptide; it reads MAHAARLLAALAALLAAAATG. A glycan (N-linked (GlcNAc...) asparagine) is linked at N340.

This sequence belongs to the prenylcysteine oxidase family. FAD is required as a cofactor.

Its subcellular location is the secreted. Likely to have oxidoreductase activity. Required in the mevalonate pathway to regulate prenylation and enhances the bactericidal activity of neutrophils. The sequence is that of Prenylcysteine oxidase 1-like (PCYOX1L) from Bos taurus (Bovine).